The chain runs to 435 residues: Glutamyl-tRNA reductase (435 aa).

Substrate is bound by residues 49 to 52 (TCNR), Ser109, 114 to 116 (ETQ), and Gln120. The active-site Nucleophile is the Cys50. 189–194 (GAGEMS) is a binding site for NADP(+).

This sequence belongs to the glutamyl-tRNA reductase family. In terms of assembly, homodimer.

It catalyses the reaction (S)-4-amino-5-oxopentanoate + tRNA(Glu) + NADP(+) = L-glutamyl-tRNA(Glu) + NADPH + H(+). It participates in porphyrin-containing compound metabolism; protoporphyrin-IX biosynthesis; 5-aminolevulinate from L-glutamyl-tRNA(Glu): step 1/2. Its function is as follows. Catalyzes the NADPH-dependent reduction of glutamyl-tRNA(Glu) to glutamate 1-semialdehyde (GSA). The polypeptide is Glutamyl-tRNA reductase (Listeria monocytogenes serotype 4a (strain HCC23)).